The primary structure comprises 433 residues: Enolase (433 aa).

Residue glutamine 167 coordinates (2R)-2-phosphoglycerate. Glutamate 209 serves as the catalytic Proton donor. The Mg(2+) site is built by aspartate 246, glutamate 291, and aspartate 318. (2R)-2-phosphoglycerate-binding residues include lysine 343, arginine 372, serine 373, and lysine 394. Lysine 343 functions as the Proton acceptor in the catalytic mechanism.

This sequence belongs to the enolase family. Component of the RNA degradosome, a multiprotein complex involved in RNA processing and mRNA degradation. Mg(2+) is required as a cofactor.

The protein resides in the cytoplasm. The protein localises to the secreted. It is found in the cell surface. It carries out the reaction (2R)-2-phosphoglycerate = phosphoenolpyruvate + H2O. It functions in the pathway carbohydrate degradation; glycolysis; pyruvate from D-glyceraldehyde 3-phosphate: step 4/5. Functionally, catalyzes the reversible conversion of 2-phosphoglycerate (2-PG) into phosphoenolpyruvate (PEP). It is essential for the degradation of carbohydrates via glycolysis. The protein is Enolase of Aeromonas salmonicida (strain A449).